An 886-amino-acid polypeptide reads, in one-letter code: Protein suppressor of hairy wing (886 aa).

Disordered stretches follow at residues Ser24 to Gly62 and Asp167 to Gly211. Residues Val184 to Asp201 are compositionally biased toward acidic residues. The segment at His221–Cys243 adopts a C2H2-type 1; atypical zinc-finger fold. A C2H2-type 2 zinc finger spans residues Ile291–His314. Residues Tyr320 to His342 form a C2H2-type 3; atypical zinc finger. C2H2-type zinc fingers lie at residues Tyr349–His367, Met381–His403, Tyr414–His436, Phe442–His464, Tyr470–His492, His498–His520, Phe524–His546, Phe554–His578, and Thr600–His623. The span at Gln571 to Gln587 shows a compositional bias: basic and acidic residues. Residues Gln571–Thr594 form a disordered region.

It localises to the nucleus. In terms of biological role, component of the gypsy chromatin insulator complex which is required for the function of the gypsy chromatin insulator and other endogenous chromatin insulators. Chromatin insulators are regulatory elements which establish independent domains of transcriptional activity within eukaryotic genomes. Insulators have two defining properties; they can block the communication between an enhancer and a promoter when placed between them and can also buffer transgenes from position effect variegation (PEV). Insulators are proposed to structure the chromatin fiber into independent domains of differing transcriptional potential by promoting the formation of distinct chromatin loops. This chromatin looping may involve the formation of insulator bodies, where homotypic interactions between individual subunits of the insulator complex could promote the clustering of widely spaced insulators at the nuclear periphery. Within the gypsy insulator complex, this protein binds specifically to a region of the gypsy element located 3' of the 5' long terminal repeat (LTR), and may also mediate interaction with other endogenous insulators at sites distinct from those recognized by Cp190. Cooperates with pita and cliff to recruit Cp190 and regulate insulator function at the front-ultraabdominal (Fub) boundary. The protein is Protein suppressor of hairy wing (su(Hw)) of Drosophila ananassae (Fruit fly).